The chain runs to 1757 residues: 1-phosphatidylinositol-3-phosphate 5-kinase FAB1A (1757 aa).

The FYVE-type zinc finger occupies 36–102 (DQSCPVCYEC…VCNYCYKQWE (67 aa)). The Zn(2+) site is built by cysteine 42, cysteine 45, cysteine 58, cysteine 61, cysteine 66, cysteine 69, cysteine 94, and cysteine 97. Disordered regions lie at residues 125-193 (ARSV…SDNQ), 276-297 (KTRQ…CEES), 313-346 (LPPE…YLRP), and 684-709 (AEKS…NFTS). Positions 134 to 145 (NSSNCTIDSTAG) are enriched in polar residues. Over residues 317 to 337 (PENEEDEREAVLSDDDGDEGD) the composition is skewed to acidic residues. A coiled-coil region spans residues 1014–1087 (LQKESKEVIK…LQQMLNVVKD (74 aa)). Residues 1395–1719 (SFSLFDSVNL…RFRKAMTAYF (325 aa)) enclose the PIPK domain. Residues 1729–1739 (AAVVPSNSSSA) show a composition bias toward low complexity. The disordered stretch occupies residues 1729–1757 (AAVVPSNSSSAEVKEEEEKDNPQAVGNKS).

As to quaternary structure, component of the PI(3,5)P2 regulatory complex at least composed of ATG18, SAC/FIG4, FAB1 and VAC14. Requires Mg(2+) as cofactor. The cofactor is Mn(2+). As to expression, ubiquitous with highest expression levels in pollen, seed, and senescent leaves.

The protein localises to the endosome membrane. The catalysed reaction is a 1,2-diacyl-sn-glycero-3-phospho-(1D-myo-inositol-3-phosphate) + ATP = a 1,2-diacyl-sn-glycero-3-phospho-(1D-myo-inositol-3,5-bisphosphate) + ADP + H(+). The PI(3,5)P2 regulatory complex regulates both the synthesis and turnover of phosphatidylinositol 3,5-bisphosphate (PtdIns(3,5)P2). Catalyzes the phosphorylation of phosphatidylinositol 3-phosphate on the fifth hydroxyl of the myo-inositol ring, to form phosphatidylinositol 3,5-bisphosphate. Plays an important role in maintenance of endomembrane homeostasis including endocytosis, vacuole formation, and vacuolar acidification processes. Required for development of viable pollen. Might mediate recycling of auxin transporters. The chain is 1-phosphatidylinositol-3-phosphate 5-kinase FAB1A (FAB1A) from Arabidopsis thaliana (Mouse-ear cress).